The following is a 235-amino-acid chain: Enolase-phosphatase E1 (235 aa).

2 residues coordinate Mg(2+): Asp-10 and Glu-12. Substrate contacts are provided by residues 130–131 (SS) and Lys-169. Position 194 (Asp-194) interacts with Mg(2+).

This sequence belongs to the HAD-like hydrolase superfamily. MasA/MtnC family. Monomer. Mg(2+) serves as cofactor.

The protein localises to the cytoplasm. Its subcellular location is the nucleus. It carries out the reaction 5-methylsulfanyl-2,3-dioxopentyl phosphate + H2O = 1,2-dihydroxy-5-(methylsulfanyl)pent-1-en-3-one + phosphate. The protein operates within amino-acid biosynthesis; L-methionine biosynthesis via salvage pathway; L-methionine from S-methyl-5-thio-alpha-D-ribose 1-phosphate: step 3/6. It functions in the pathway amino-acid biosynthesis; L-methionine biosynthesis via salvage pathway; L-methionine from S-methyl-5-thio-alpha-D-ribose 1-phosphate: step 4/6. Bifunctional enzyme that catalyzes the enolization of 2,3-diketo-5-methylthiopentyl-1-phosphate (DK-MTP-1-P) into the intermediate 2-hydroxy-3-keto-5-methylthiopentenyl-1-phosphate (HK-MTPenyl-1-P), which is then dephosphorylated to form the acireductone 1,2-dihydroxy-3-keto-5-methylthiopentene (DHK-MTPene). This is Enolase-phosphatase E1 from Komagataella phaffii (strain GS115 / ATCC 20864) (Yeast).